We begin with the raw amino-acid sequence, 1111 residues long: Nuclear migration and anchoring protein unc-84 (1111 aa).

Residues 1 to 509 are Nuclear-facing; that stretch reads MAPATEADNN…LTDKKSSKFS (509 aa). Required for nuclear envelope localization regions lie at residues 118 to 244 and 503 to 507; these read YILR…SQTL and KKSSK. Residues 232–253 form a disordered region; the sequence is ERASRMTTRSQTLERSRKFDGL. Positions 243-252 are enriched in basic and acidic residues; sequence TLERSRKFDG. Residues 510–530 traverse the membrane as a helical segment; that stretch reads WCQILGLLLALLFAIFLLGFL. The Perinuclear space portion of the chain corresponds to 531-1111; sequence TSDNTAIRVK…LRVHGKVVQV (581 aa). An interaction with zyg-12 region spans residues 912 to 1111; it reads QYDKNHLEAI…LRVHGKVVQV (200 aa). Residues 945-1109 enclose the SUN domain; the sequence is GGAVVSTRCS…YRLRVHGKVV (165 aa).

As to quaternary structure, component of the unc-83-unc-84 LINC complex which contains at least unc-83 and unc-84. Within the unc-83-unc-84 LINC complex interacts (via C-terminus) with unc-83; the interaction is probably required to recruit unc-83 to the nuclear membrane. Most likely interacts with anc-1; the interaction is probably required to recruit anc-1 to the nuclear envelope. Interacts (via C-terminus) with zyg-12 (via C-terminus); the interaction is direct. May interact with lmn-1; this interaction may be required to complete the connection between the nuclear lamina and the cytoskeleton. In terms of tissue distribution, expressed in all somatic cells. Not expressed in germ cells in the mitotic and transition zones of the gonad. One study shows expression at the beginning of the late pachytene stage in the proximal gonad, but there is no expression in the male germline, suggesting expression is specific to oogenesis in hermaphrodites.

Its subcellular location is the nucleus inner membrane. It localises to the cytoplasm. The protein localises to the cytoskeleton. In terms of biological role, involved in nuclear migration and anchoring in hypodermal precursor cells. Most likely recruits anc-1 to the nuclear envelope where anc-1 functions to tether the nucleus to the actin cytoskeleton. Component of the unc-83-unc-84 LINC (LInker of Nucleoskeleton and Cytoskeleton) complex where it recruits and interacts with unc-83 to form a bridge connecting the nuclear envelope to the cytoskeleton which allows for nuclear transport along microtubules. Its role in nuclear migration may be in association with lamin, lmn-1. Regulates nuclear migrations in one-cell embryos, controlling the posterior migration of the male pronucleus following fertilization. Not required for centrosome attachment to the nucleus. Plays a role in the maintenance of the nuclear envelope architecture in body wall muscle cells. May be involved in DNA damage repair through an association with zyg-12. Potentially has roles in homologous recombination, double strand break repair and meiotic recombination. Specifically, may in part inhibit non-homologous end joining repair, most likely through recruiting fan-1 to the nucleoplasm, to facilitate the repair of DNA cross-links. This is Nuclear migration and anchoring protein unc-84 from Caenorhabditis elegans.